Reading from the N-terminus, the 131-residue chain is MVVLYTTASCASCRKAKAWLEENQIDYTEKNIVSNSMTVDELKSILRLTEEGATEIISTRSKTFQDLNINIEELSLNEFYKLIIEHPLMLRRPIMLDEKRLQIGFNDEEIRKFLPRSVRTFLNIELQKLAN.

Cys10 and Cys13 form a disulfide bridge.

The protein belongs to the ArsC family. Spx subfamily. As to quaternary structure, interacts with the C-terminal domain of the alpha subunit of the RNAP.

It is found in the cytoplasm. Its function is as follows. Global transcriptional regulator that plays a key role in stress response and exerts either positive or negative regulation of genes. Acts by interacting with the C-terminal domain of the alpha subunit of the RNA polymerase (RNAP). This interaction can enhance binding of RNAP to the promoter region of target genes and stimulate their transcription, or block interaction of RNAP with activator. This is Global transcriptional regulator Spx 2 from Bacillus anthracis.